A 62-amino-acid polypeptide reads, in one-letter code: UPF0337 protein mll8179 (62 aa).

A disordered region spans residues Met1–Lys42.

It belongs to the UPF0337 (CsbD) family.

The protein is UPF0337 protein mll8179 of Mesorhizobium japonicum (strain LMG 29417 / CECT 9101 / MAFF 303099) (Mesorhizobium loti (strain MAFF 303099)).